Consider the following 70-residue polypeptide: Dermaseptin-H3 (70 aa).

An N-terminal signal peptide occupies residues 1–22; that stretch reads MAFLKKSLFLVLFLGMVSLSIC. Positions 23-43 are excised as a propeptide; the sequence is EEEKRENEDEELQEDDEQSEM. Residues 25-44 form a disordered region; it reads EKRENEDEELQEDDEQSEMK. A compositionally biased stretch (acidic residues) spans 30–40; the sequence is EDEELQEDDEQ. Leucine 70 carries the post-translational modification Leucine amide.

As to expression, expressed by the skin glands.

It localises to the secreted. Its function is as follows. Has antibacterial activity against the Gram-negative bacteria E.coli and P.aeruginosa, and the Gram-positive bacteria S.aureus and M.luteus. Has antiprotozoal activity against L.amazonensis. No hemolytic activity. In Pithecopus hypochondrialis (Orange-legged leaf frog), this protein is Dermaseptin-H3.